Consider the following 307-residue polypeptide: Aspartate carbamoyltransferase catalytic subunit (307 aa).

Positions 54 and 55 each coordinate carbamoyl phosphate. Residue Lys-83 coordinates L-aspartate. Carbamoyl phosphate is bound by residues Arg-104, His-132, and Gln-135. Positions 165 and 228 each coordinate L-aspartate. Carbamoyl phosphate contacts are provided by Leu-267 and Pro-268.

This sequence belongs to the aspartate/ornithine carbamoyltransferase superfamily. ATCase family. In terms of assembly, heterododecamer (2C3:3R2) of six catalytic PyrB chains organized as two trimers (C3), and six regulatory PyrI chains organized as three dimers (R2).

It carries out the reaction carbamoyl phosphate + L-aspartate = N-carbamoyl-L-aspartate + phosphate + H(+). Its pathway is pyrimidine metabolism; UMP biosynthesis via de novo pathway; (S)-dihydroorotate from bicarbonate: step 2/3. Its function is as follows. Catalyzes the condensation of carbamoyl phosphate and aspartate to form carbamoyl aspartate and inorganic phosphate, the committed step in the de novo pyrimidine nucleotide biosynthesis pathway. This Clostridium botulinum (strain Loch Maree / Type A3) protein is Aspartate carbamoyltransferase catalytic subunit.